The sequence spans 163 residues: tRNA-acetylating toxin 2 (163 aa).

Tyr137 is an active-site residue.

It belongs to the acetyltransferase family. GNAT subfamily. As to quaternary structure, homodimer. Forms a complex with cognate antitoxin TacA2.

It catalyses the reaction glycyl-tRNA(Gly) + acetyl-CoA = N-acetylglycyl-tRNA(Gly) + CoA + H(+). The catalysed reaction is L-isoleucyl-tRNA(Ile) + acetyl-CoA = N-acetyl-L-isoleucyl-tRNA(Ile) + CoA + H(+). It carries out the reaction L-leucyl-tRNA(Leu) + acetyl-CoA = N-acetyl-L-leucyl-tRNA(Leu) + CoA + H(+). Functionally, toxic component of a type II toxin-antitoxin (TA) system. Acetylates tRNA and inhibits translation. Acetylates mainly Gly and Ile/Leu in vitro. Overexpression during the lag phase of a tacA2-tacT2 deletion strain leads to a 100-fold increase in persister cells in the presence of cefotaxime and a non-growth state in the absence of antibiotic. This protein, which has a single amino acid compared to S.typhimurium strain 14028s (Lys-29 is Glu in 14028s), produces 100-fold more persister cells, has much higher acetylation activity and binds tRNA much better. Persister cell formation and the growth defect are neutralized by cognate antitoxin TacA2. The TacA2-TacT2 complex both represses and derepresses expression of its own operon. The polypeptide is tRNA-acetylating toxin 2 (Salmonella enteritidis).